A 119-amino-acid chain; its full sequence is Large ribosomal subunit protein bL20 (119 aa).

The protein belongs to the bacterial ribosomal protein bL20 family.

Its function is as follows. Binds directly to 23S ribosomal RNA and is necessary for the in vitro assembly process of the 50S ribosomal subunit. It is not involved in the protein synthesizing functions of that subunit. The sequence is that of Large ribosomal subunit protein bL20 from Gloeobacter violaceus (strain ATCC 29082 / PCC 7421).